The primary structure comprises 421 residues: uncharacterized protein (421 aa).

The protein belongs to the glycosyltransferase 28 family.

This is an uncharacterized protein from Mycobacterium leprae (strain TN).